Here is a 66-residue protein sequence, read N- to C-terminus: Pancreatic polypeptide prohormone (66 aa).

A Tyrosine amide modification is found at Y36. A propeptide spanning residues E60–V66 is cleaved from the precursor.

It belongs to the NPY family.

It localises to the secreted. Hormone secreted by pancreatic cells that acts as a regulator of pancreatic and gastrointestinal functions probably by signaling through the G protein-coupled receptor NPY4R2. The sequence is that of Pancreatic polypeptide prohormone (PPY) from Felis catus (Cat).